The following is a 301-amino-acid chain: DSC E3 ubiquitin ligase complex subunit B (301 aa).

3 consecutive transmembrane segments (helical) span residues 9-29, 52-72, and 90-110; these read APIT…LSIL, LATW…AAML, and TFII…LVLL. Residues 268–284 are compositionally biased toward low complexity; it reads AAAAASGNAGSASEASG. The tract at residues 268–301 is disordered; that stretch reads AAAAASGNAGSASEASGQRQRRREGGIMDRLRAL. A compositionally biased stretch (basic and acidic residues) spans 290-301; it reads REGGIMDRLRAL.

Component of the DSC E3 ubiquitin ligase complex composed of dscA, dscB, dscC and dscD.

The protein resides in the endoplasmic reticulum membrane. It carries out the reaction S-ubiquitinyl-[E2 ubiquitin-conjugating enzyme]-L-cysteine + [acceptor protein]-L-lysine = [E2 ubiquitin-conjugating enzyme]-L-cysteine + N(6)-ubiquitinyl-[acceptor protein]-L-lysine.. It participates in protein modification; protein ubiquitination. Its function is as follows. Component of the DSC E3 ubiquitin ligase complex which is required for the srbA transcriptional activator proteolytic cleavage to release the soluble transcription factor from the membrane in low oxygen or sterol conditions. Required for growth during hypoxia and triazole drug susceptibility, as well as for virulence in a murine model of invasive pulmonary aspergillosis (IPA). The polypeptide is DSC E3 ubiquitin ligase complex subunit B (Aspergillus fumigatus (strain ATCC MYA-4609 / CBS 101355 / FGSC A1100 / Af293) (Neosartorya fumigata)).